The sequence spans 98 residues: NADH-ubiquinone oxidoreductase chain 4L (98 aa).

3 helical membrane passes run Met1–Leu21, Ser29–Leu49, and Ile61–Val81.

This sequence belongs to the complex I subunit 4L family. Core subunit of respiratory chain NADH dehydrogenase (Complex I) which is composed of 45 different subunits.

Its subcellular location is the mitochondrion inner membrane. It carries out the reaction a ubiquinone + NADH + 5 H(+)(in) = a ubiquinol + NAD(+) + 4 H(+)(out). In terms of biological role, core subunit of the mitochondrial membrane respiratory chain NADH dehydrogenase (Complex I) which catalyzes electron transfer from NADH through the respiratory chain, using ubiquinone as an electron acceptor. Part of the enzyme membrane arm which is embedded in the lipid bilayer and involved in proton translocation. The polypeptide is NADH-ubiquinone oxidoreductase chain 4L (MT-ND4L) (Rhinolophus monoceros (Formosan lesser horseshoe bat)).